Reading from the N-terminus, the 433-residue chain is Signal recognition particle 54 kDa protein (433 aa).

GTP contacts are provided by residues glycine 106–threonine 113, aspartate 186–arginine 190, and threonine 244–aspartate 247.

Belongs to the GTP-binding SRP family. SRP54 subfamily. Part of the signal recognition particle protein translocation system, which is composed of SRP and FtsY. Archaeal SRP consists of a 7S RNA molecule of 300 nucleotides and two protein subunits: SRP54 and SRP19.

It localises to the cytoplasm. It carries out the reaction GTP + H2O = GDP + phosphate + H(+). Functionally, involved in targeting and insertion of nascent membrane proteins into the cytoplasmic membrane. Binds to the hydrophobic signal sequence of the ribosome-nascent chain (RNC) as it emerges from the ribosomes. The SRP-RNC complex is then targeted to the cytoplasmic membrane where it interacts with the SRP receptor FtsY. The polypeptide is Signal recognition particle 54 kDa protein (Pyrobaculum arsenaticum (strain DSM 13514 / JCM 11321 / PZ6)).